Reading from the N-terminus, the 936-residue chain is Lipoxygenase 2.1, chloroplastic (936 aa).

The segment at 1-69 (MLTATKPLVG…LSADSNGAAV (69 aa)) is disordered. Residues 47-59 (STSTSTTTTTTTT) are compositionally biased toward low complexity. The 130-residue stretch at 88–217 (MKATVTVHMS…CTPDKRVFFP (130 aa)) folds into the PLAT domain. In terms of domain architecture, Lipoxygenase spans 220 to 936 (SYLPSQTPKG…EMGIPNSISI (717 aa)). The disordered stretch occupies residues 264–308 (LGNPDDDNNPTTRPVLGGKEHPYPRRCRTGRPRSKKDPFSEERSH). Residues 287–297 (PRRCRTGRPRS) are compositionally biased toward basic residues. Residues 298–308 (KKDPFSEERSH) show a composition bias toward basic and acidic residues. Positions 587, 592, 777, 781, and 936 each coordinate Fe cation.

This sequence belongs to the lipoxygenase family. Fe cation is required as a cofactor. Post-translationally, the N-terminus is blocked.

It localises to the plastid. The protein resides in the chloroplast. It carries out the reaction (9Z,12Z)-octadecadienoate + O2 = (13S)-hydroperoxy-(9Z,11E)-octadecadienoate. The enzyme catalyses (9Z,12Z,15Z)-octadecatrienoate + O2 = (13S)-hydroperoxy-(9Z,11E,15Z)-octadecatrienoate. The protein operates within lipid metabolism; oxylipin biosynthesis. Its function is as follows. Plant lipoxygenase may be involved in a number of diverse aspects of plant physiology including growth and development, pest resistance, and senescence or responses to wounding. This enzyme is possibly involved in jasmonic acid synthesis. It exhibits linoleate 13-lipoxygenase and arachidonate 15-lipoxygenase activity. This Hordeum vulgare (Barley) protein is Lipoxygenase 2.1, chloroplastic (LOX2.1).